The primary structure comprises 507 residues: MEELQRYLKMDRSRERDFLYSLLFQEYIYALAHDFGLTKSIPYESMQILSYDNKYSSLIVKRLIIRMYQQKHLIILDNDSKNKNFLGHNKNLYSQMISEGFAVIVEIPFALRLVSSYQGKEIEKSINLGSIHSTFPFLEDKFVHLNHVLNILIPYPIHFELIVQNLRCWIQDASFLHLLRFFLYEYHNWNSFTTQKMKQNSLFLKENRRFFLFLYNFHVYESESIFLFLRKKSYHLRSTSSIAFLDRTHFFGKIEHLKVVFRNDFHTMLWLFKDPFMHYFRYQGKSIMSSKGTPLLMKKWKYYLVNLWECHFYFWSQPNRIHINQLSNIFLNFLGYLSSVRPNPSVVRNQMLENAFIIDISRNKLSTLVPIIPLIGSLAKAKFCNLSGQPISKPAWTDSLDSDIIDRFGRICRNVSHYYSGSSKKKTLYRIKYILRLSCARTLARKHKSTVRSFLKRLGSEFLEEFLIEEEQVLSFILPKISSSSQRLSKERIWYFDIIRINDLMDL.

It belongs to the intron maturase 2 family. MatK subfamily.

Its subcellular location is the plastid. The protein localises to the chloroplast. Functionally, usually encoded in the trnK tRNA gene intron. Probably assists in splicing its own and other chloroplast group II introns. This chain is Maturase K, found in Ranunculus macranthus (Large buttercup).